The primary structure comprises 2291 residues: Spectrin beta chain (2291 aa).

The actin-binding stretch occupies residues 1-271 (MTTDISIVRW…IITYVVTYYH (271 aa)). 2 Calponin-homology (CH) domains span residues 50 to 154 (SVQK…LRFQ) and 169 to 274 (KSAK…HYFS). Spectrin repeat units lie at residues 300 to 408 (VHDY…ALRE), 420 to 521 (AARF…MRLE), 525 to 633 (QLQQ…RLEE), 636 to 739 (KLWQ…RLEN), 743 to 843 (YFQL…QRLL), 848 to 948 (LYKL…MDDL), 954 to 1057 (VQTF…KLEE), 1060 to 1166 (DLHR…VLLS), 1170 to 1272 (DQQL…EKLK), 1276 to 1376 (KLHE…GAML), 1386 to 1484 (QQTC…KALE), 1488 to 1591 (EAFQ…HLLE), 1594 to 1697 (KVQQ…RLNE), 1701 to 1802 (LFML…TQML), 1807 to 1909 (ELHK…QKLA), 1913 to 2015 (DLFR…ENLQ), and 2020 to 2089 (VYQF…KEMK). The span at 2097-2140 (EAERQRIKEEQEAKAASEAAEQAKREAERRDDVDVGASHDDSER) shows a compositional bias: basic and acidic residues. The interval 2097–2152 (EAERQRIKEEQEAKAASEAAEQAKREAERRDDVDVGASHDDSERGGTPGAGEGHEG) is disordered. Residues 2147–2259 (GEGHEGYVTR…WVTSLKAQSD (113 aa)) enclose the PH domain. At Ser2195 the chain carries Phosphoserine. Positions 2262–2275 (AVAASRSQTLPATS) are enriched in polar residues. The disordered stretch occupies residues 2262–2291 (AVAASRSQTLPATSQKDEPKRRSFFTLKKK).

The protein belongs to the spectrin family. In terms of assembly, native spectrin molecule is a tetramer composed of two antiparallel heterodimers joined head to head so that each end of the native molecule includes the C-terminus of the alpha subunit and the N-terminus of the beta subunit.

It localises to the cytoplasm. The protein localises to the cytoskeleton. Its subcellular location is the cell cortex. In terms of biological role, spectrin is the major constituent of the cytoskeletal network underlying the erythrocyte plasma membrane. It associates with band 4.1 and actin to form the cytoskeletal superstructure of the erythrocyte plasma membrane. Interacts with calmodulin in a calcium-dependent manner. This is Spectrin beta chain (beta-Spec) from Drosophila melanogaster (Fruit fly).